The chain runs to 287 residues: Pyridoxal kinase PdxY (287 aa).

Residues Ser10 and 45–46 (TQ) each bind substrate. ATP contacts are provided by residues Asp112, Ala144, Glu149, Lys182, and 209-212 (RPLV). Asp224 contacts substrate.

This sequence belongs to the pyridoxine kinase family. PdxY subfamily. In terms of assembly, homodimer. Requires Mg(2+) as cofactor.

It catalyses the reaction pyridoxal + ATP = pyridoxal 5'-phosphate + ADP + H(+). It functions in the pathway cofactor metabolism; pyridoxal 5'-phosphate salvage; pyridoxal 5'-phosphate from pyridoxal: step 1/1. In terms of biological role, pyridoxal kinase involved in the salvage pathway of pyridoxal 5'-phosphate (PLP). Catalyzes the phosphorylation of pyridoxal to PLP. This Shigella sonnei (strain Ss046) protein is Pyridoxal kinase PdxY.